Consider the following 387-residue polypeptide: Cytochrome b (387 aa).

Helical transmembrane passes span 32-52, 76-98, 113-133, and 179-199; these read FGSLLACVLVVQIVTGILLAC, FLLRALHANGASFFFIFLYLHIG, TWNIGVIIFLLTIITAFLGYC, and FFSLHYLMPFVIAALSIMHLI. Heme b contacts are provided by H82 and H96. 2 residues coordinate heme b: H183 and H197. H202 contacts a ubiquinone. 4 consecutive transmembrane segments (helical) span residues 225-245, 289-309, 321-341, and 348-368; these read FLIKDLITIFIFLLAINYMVF, QLGVVAMLLSILVLLLLPLLD, MGKFFFWCFVADFCILAWIGG, and FITIGAYATAFYFIYFFILIP.

Belongs to the cytochrome b family. In terms of assembly, fungal cytochrome b-c1 complex contains 10 subunits; 3 respiratory subunits, 2 core proteins and 5 low-molecular weight proteins. Cytochrome b-c1 complex is a homodimer. Heme b is required as a cofactor.

Its subcellular location is the mitochondrion inner membrane. Functionally, component of the ubiquinol-cytochrome c reductase complex (complex III or cytochrome b-c1 complex) that is part of the mitochondrial respiratory chain. The b-c1 complex mediates electron transfer from ubiquinol to cytochrome c. Contributes to the generation of a proton gradient across the mitochondrial membrane that is then used for ATP synthesis. This is Cytochrome b (cob) from Schizosaccharomyces octosporus (Fission yeast).